A 428-amino-acid chain; its full sequence is Chaperone SurA (428 aa).

The signal sequence occupies residues 1–19; sequence MNIWKTLLLGMLVTGSAVS. 2 consecutive PpiC domains span residues 170–268 and 277–377; these read SVEY…KIED and VTEV…EVLD.

The protein localises to the periplasm. The enzyme catalyses [protein]-peptidylproline (omega=180) = [protein]-peptidylproline (omega=0). Its function is as follows. Chaperone involved in the correct folding and assembly of outer membrane proteins. Recognizes specific patterns of aromatic residues and the orientation of their side chains, which are found more frequently in integral outer membrane proteins. May act in both early periplasmic and late outer membrane-associated steps of protein maturation. This Vibrio vulnificus (strain CMCP6) protein is Chaperone SurA.